The chain runs to 480 residues: Transposase for transposon Tn552 (480 aa).

The H-T-H motif DNA-binding region spans 36–55; the sequence is LSSISKSKGIALSTLYRWNK. In terms of domain architecture, Integrase catalytic spans 155-341; it reads ESSRPNEIWQ…TPINRWNSNH (187 aa). Residues 438-480 are disordered; it reads RKHLKQNIASPSTTDLIKEEKSYGYSPQETTKNVKKLKRYRND. Residues 470 to 480 are compositionally biased toward basic residues; it reads NVKKLKRYRND.

This chain is Transposase for transposon Tn552, found in Staphylococcus aureus.